The primary structure comprises 361 residues: Phenylalanine--tRNA ligase alpha subunit (361 aa).

Mg(2+) is bound at residue Glu-260.

It belongs to the class-II aminoacyl-tRNA synthetase family. Phe-tRNA synthetase alpha subunit type 1 subfamily. Tetramer of two alpha and two beta subunits. The cofactor is Mg(2+).

The protein resides in the cytoplasm. The catalysed reaction is tRNA(Phe) + L-phenylalanine + ATP = L-phenylalanyl-tRNA(Phe) + AMP + diphosphate + H(+). This chain is Phenylalanine--tRNA ligase alpha subunit, found in Bartonella quintana (strain Toulouse) (Rochalimaea quintana).